A 181-amino-acid chain; its full sequence is Large ribosomal subunit protein uL6 (181 aa).

This sequence belongs to the universal ribosomal protein uL6 family. As to quaternary structure, part of the 50S ribosomal subunit.

Functionally, this protein binds to the 23S rRNA, and is important in its secondary structure. It is located near the subunit interface in the base of the L7/L12 stalk, and near the tRNA binding site of the peptidyltransferase center. This chain is Large ribosomal subunit protein uL6, found in Vesicomyosocius okutanii subsp. Calyptogena okutanii (strain HA).